Reading from the N-terminus, the 911-residue chain is DNA ligase 4 (911 aa).

ATP contacts are provided by Glu271, Thr272, Lys273, Leu274, Arg278, Glu331, Lys345, Phe367, Glu427, Lys432, Lys449, and Lys451. The active-site N6-AMP-lysine intermediate is the Lys273. Residue Glu331 coordinates Mg(2+). Residue Glu427 coordinates Mg(2+). Residues Leu610–Asp620 are required for catalytic activity. BRCT domains lie at Lys654–Met743 and Ser808–Ile911.

The protein belongs to the ATP-dependent DNA ligase family. Interacts with XRCC4; the LIG4-XRCC4 subcomplex has a 1:2 stoichiometry and XRCC4 is required for LIG4 stability. Component of the core long-range non-homologous end joining (NHEJ) complex (also named DNA-PK complex) composed of PRKDC, LIG4, XRCC4, XRCC6/Ku70, XRCC5/Ku86 and NHEJ1/XLF. Additional component of the NHEJ complex includes PAXX. Following autophosphorylation, PRKDC dissociates from DNA, leading to formation of the short-range NHEJ complex, composed of LIG4, XRCC4, XRCC6/Ku70, XRCC5/Ku86 and NHEJ1/XLF. Interacts with DCLRE1C; the interaction is direct. Interacts with APLF. Mg(2+) is required as a cofactor. As to expression, testis, thymus, prostate and heart.

The protein resides in the nucleus. The enzyme catalyses ATP + (deoxyribonucleotide)n-3'-hydroxyl + 5'-phospho-(deoxyribonucleotide)m = (deoxyribonucleotide)n+m + AMP + diphosphate.. In terms of biological role, DNA ligase involved in DNA non-homologous end joining (NHEJ); required for double-strand break (DSB) repair and V(D)J recombination. Catalyzes the NHEJ ligation step of the broken DNA during DSB repair by resealing the DNA breaks after the gap filling is completed. Joins single-strand breaks in a double-stranded polydeoxynucleotide in an ATP-dependent reaction. LIG4 is mechanistically flexible: it can ligate nicks as well as compatible DNA overhangs alone, while in the presence of XRCC4, it can ligate ends with 2-nucleotides (nt) microhomology and 1-nt gaps. Forms a subcomplex with XRCC4; the LIG4-XRCC4 subcomplex is responsible for the NHEJ ligation step and XRCC4 enhances the joining activity of LIG4. Binding of the LIG4-XRCC4 complex to DNA ends is dependent on the assembly of the DNA-dependent protein kinase complex DNA-PK to these DNA ends. LIG4 regulates nuclear localization of XRCC4. The protein is DNA ligase 4 of Homo sapiens (Human).